A 29-amino-acid chain; its full sequence is Cytochrome b6-f complex subunit 8 (29 aa).

A helical membrane pass occupies residues 3 to 23; it reads TVSLAWAALMVVFTFSLSLVV.

It belongs to the PetN family. The 4 large subunits of the cytochrome b6-f complex are cytochrome b6, subunit IV (17 kDa polypeptide, PetD), cytochrome f and the Rieske protein, while the 4 small subunits are PetG, PetL, PetM and PetN. The complex functions as a dimer.

Its subcellular location is the plastid. It localises to the chloroplast thylakoid membrane. Component of the cytochrome b6-f complex, which mediates electron transfer between photosystem II (PSII) and photosystem I (PSI), cyclic electron flow around PSI, and state transitions. This is Cytochrome b6-f complex subunit 8 from Chloranthus spicatus (Chulantree).